Reading from the N-terminus, the 663-residue chain is Methionine--tRNA ligase (663 aa).

The 'HIGH' region signature appears at 10–20 (AYTNGPLHLGH). C142, C145, C154, and C157 together coordinate Zn(2+). Positions 323-327 (KMSTS) match the 'KMSKS' region motif. Residue T326 participates in ATP binding. The tRNA-binding domain maps to 563 to 663 (YFGNVDLRVG…RDLPVGSKIH (101 aa)).

The protein belongs to the class-I aminoacyl-tRNA synthetase family. MetG type 1 subfamily. Homodimer. The cofactor is Zn(2+).

It is found in the cytoplasm. The catalysed reaction is tRNA(Met) + L-methionine + ATP = L-methionyl-tRNA(Met) + AMP + diphosphate. Functionally, is required not only for elongation of protein synthesis but also for the initiation of all mRNA translation through initiator tRNA(fMet) aminoacylation. The sequence is that of Methionine--tRNA ligase from Methanococcus maripaludis (strain C7 / ATCC BAA-1331).